Consider the following 660-residue polypeptide: Histone deacetylase 5 (660 aa).

An N-acetylalanine modification is found at A2. The segment at 26-349 (KVGLIYDETM…SLACVQVLLE (324 aa)) is histone deacetylase. Residue H158 is the Proton donor/acceptor of the active site. Zn(2+) is bound by residues D198, H200, and D291.

Belongs to the histone deacetylase family. HD type 2 subfamily. As to quaternary structure, interacts with HDA6. It depends on Zn(2+) as a cofactor. In terms of tissue distribution, expressed in stems, leaves, flowers, siliques and mature seeds.

The protein resides in the nucleus. It is found in the cytoplasm. The enzyme catalyses N(6)-acetyl-L-lysyl-[histone] + H2O = L-lysyl-[histone] + acetate. With respect to regulation, inhibited by trichostatin A (TSA), a well-known histone deacetylase inhibitor. In terms of biological role, responsible for the deacetylation of lysine residues on the N-terminal part of the core histones (H2A, H2B, H3 and H4). Histone deacetylation gives a tag for epigenetic repression and plays an important role in transcriptional regulation, cell cycle progression and developmental events. Histone deacetylases act via the formation of large multiprotein complexes. Involved in the regulation of flowering time by repressing FLC and AGL27/MAF1 expression. Forms a histone deacetylase complex with HDA6, FLD and MSI4/FVE that represses FLC gene expression to control flowering time. Unlike its tandem duplication HDA18, HDA5 does not seem to be required for the cellular patterning in the root epidermis. The sequence is that of Histone deacetylase 5 from Arabidopsis thaliana (Mouse-ear cress).